Consider the following 394-residue polypeptide: Protein-glutamate methylesterase/protein-glutamine glutaminase 2 (394 aa).

In terms of domain architecture, Response regulatory spans 4–121 (KVLVVDDSSF…ARNRDEAISL (118 aa)). At Asp-55 the chain carries 4-aspartylphosphate. Positions 202 to 394 (SGKKYQLMAI…AERILVEVGR (193 aa)) constitute a CheB-type methylesterase domain. Catalysis depends on residues Ser-214, His-241, and Asp-337.

This sequence belongs to the CheB family. Phosphorylated by CheA. Phosphorylation of the N-terminal regulatory domain activates the methylesterase activity.

Its subcellular location is the cytoplasm. It catalyses the reaction [protein]-L-glutamate 5-O-methyl ester + H2O = L-glutamyl-[protein] + methanol + H(+). The catalysed reaction is L-glutaminyl-[protein] + H2O = L-glutamyl-[protein] + NH4(+). Functionally, involved in chemotaxis. Part of a chemotaxis signal transduction system that modulates chemotaxis in response to various stimuli. Catalyzes the demethylation of specific methylglutamate residues introduced into the chemoreceptors (methyl-accepting chemotaxis proteins or MCP) by CheR. Also mediates the irreversible deamidation of specific glutamine residues to glutamic acid. The chain is Protein-glutamate methylesterase/protein-glutamine glutaminase 2 from Photobacterium profundum (strain SS9).